The sequence spans 117 residues: MNNIIKMLNEEQMKKDVPEFGAGDTVVVKVRVVEGGKERLQAFEGVVIAKRNRGVHSAFTVRKISNGEGVERAFQTHSPIISDIEVKRRGRVRRAKLYYLRERSGKSARIREKLSTK.

This sequence belongs to the bacterial ribosomal protein bL19 family.

Its function is as follows. This protein is located at the 30S-50S ribosomal subunit interface and may play a role in the structure and function of the aminoacyl-tRNA binding site. The sequence is that of Large ribosomal subunit protein bL19 from Shewanella woodyi (strain ATCC 51908 / MS32).